The primary structure comprises 255 residues: Imidazole glycerol phosphate synthase subunit HisF (255 aa).

Active-site residues include Asp-11 and Asp-130.

The protein belongs to the HisA/HisF family. Heterodimer of HisH and HisF.

It is found in the cytoplasm. The enzyme catalyses 5-[(5-phospho-1-deoxy-D-ribulos-1-ylimino)methylamino]-1-(5-phospho-beta-D-ribosyl)imidazole-4-carboxamide + L-glutamine = D-erythro-1-(imidazol-4-yl)glycerol 3-phosphate + 5-amino-1-(5-phospho-beta-D-ribosyl)imidazole-4-carboxamide + L-glutamate + H(+). It functions in the pathway amino-acid biosynthesis; L-histidine biosynthesis; L-histidine from 5-phospho-alpha-D-ribose 1-diphosphate: step 5/9. IGPS catalyzes the conversion of PRFAR and glutamine to IGP, AICAR and glutamate. The HisF subunit catalyzes the cyclization activity that produces IGP and AICAR from PRFAR using the ammonia provided by the HisH subunit. This chain is Imidazole glycerol phosphate synthase subunit HisF, found in Maricaulis maris (strain MCS10) (Caulobacter maris).